The following is a 232-amino-acid chain: Orotidine 5'-phosphate decarboxylase (232 aa).

Residues Asp-11, Lys-33, 60–69, Thr-119, Arg-180, Gln-189, Gly-209, and Arg-210 contribute to the substrate site; that span reads DLKFHDIPHT. Residue Lys-62 is the Proton donor of the active site.

It belongs to the OMP decarboxylase family. Type 1 subfamily. Homodimer.

It catalyses the reaction orotidine 5'-phosphate + H(+) = UMP + CO2. It participates in pyrimidine metabolism; UMP biosynthesis via de novo pathway; UMP from orotate: step 2/2. Catalyzes the decarboxylation of orotidine 5'-monophosphate (OMP) to uridine 5'-monophosphate (UMP). The sequence is that of Orotidine 5'-phosphate decarboxylase from Nitrosococcus oceani (strain ATCC 19707 / BCRC 17464 / JCM 30415 / NCIMB 11848 / C-107).